The following is a 388-amino-acid chain: MVAPLLVFLFSLQLCHTTSWAYVGGNSLNSNSLHASYSEFPAGTSNEVPEDAANGQDDNDDSQLTEPNDNNAPLVQSIDDETEMQFPKPIQWVSIDHLRNSIILRFQNPTPKILNKLDPEEMKRLRSLQENAMRWGKRSYESYPLNRNGLADKSSVGRMGFLSNHQVIRDSRGDNFMRFGRSVGGSGGNDDNFMRFGRASGSSDFMRFGRAGQDNFMRFGRAAGQDFMRFGRGSGQDFMRFGRSPGSQDFMRFGRNPGSQDFMRFGRSPGSQDFMRFGRNPGSQDFMRFGRNPGSQDFMRFGRNPGSQDFMRFGRASGGQDFMRFGRAPSGQDFMRFGRPDNFMRFGRTPAQSSDFMRFGRTPTQSSDFMRFGKSLDKSENKTSDLQK.

The N-terminal stretch at 1–21 is a signal peptide; the sequence is MVAPLLVFLFSLQLCHTTSWA. A propeptide spanning residues 22–172 is cleaved from the precursor; that stretch reads YVGGNSLNSN…SNHQVIRDSR (151 aa). Residues 40 to 74 are disordered; that stretch reads FPAGTSNEVPEDAANGQDDNDDSQLTEPNDNNAPL. A compositionally biased stretch (polar residues) spans 64–74; it reads LTEPNDNNAPL. Phenylalanine amide occurs at positions 179, 196, 208, 219, 230, 241, 253, 265, 277, 289, 301, 313, 325, 337, 346, 359, and 372. The disordered stretch occupies residues 360–388; sequence GRTPTQSSDFMRFGKSLDKSENKTSDLQK. The segment covering 374 to 388 has biased composition (basic and acidic residues); it reads KSLDKSENKTSDLQK. The propeptide occupies 375–388; the sequence is SLDKSENKTSDLQK.

The protein belongs to the FARP (FMRFamide related peptide) family. In terms of tissue distribution, in the brain, expressed in 2 large cells in the lateral neurons in each optic lobe, 2 slightly bigger cells on both sides of the tritocerebrum, around 14 small cells in the dorsal area, around 13 cells in the subesophageal ganglion, and in the central brain.

The protein localises to the secreted. The sequence is that of FMRFamide neuropeptides from Musca domestica (House fly).